We begin with the raw amino-acid sequence, 375 residues long: D-apiose dehydrogenase (375 aa).

29–30 lines the NAD(+) pocket; it reads FF. Residues Trp38, Arg39, Ile41, and Ala44 each contribute to the Mg(2+) site. NAD(+) is bound by residues Asp51, Ser93, 111 to 112, Asn140, and 179 to 181; these read QK and QPY. Position 112 (Lys112) interacts with substrate. Substrate is bound by residues Gln179, Asp192, His196, and Tyr246.

Belongs to the Gfo/Idh/MocA family.

The catalysed reaction is D-apiofuranose + NAD(+) = D-apionolactone + NADH + H(+). Its pathway is carbohydrate metabolism. In terms of biological role, involved in catabolism of D-apiose. Catalyzes oxidation of D-apiose to D-apionolactone. This Paraburkholderia graminis (strain ATCC 700544 / DSM 17151 / LMG 18924 / NCIMB 13744 / C4D1M) protein is D-apiose dehydrogenase.